The following is a 360-amino-acid chain: POU domain, class 5, transcription factor 1 (360 aa).

2 disordered regions span residues 1-50 and 87-118; these read MAGH…IGPG and QGGLETPQPEGEAGAGVESNSEGASPEPCAAP. The 9aaTAD signature appears at 4–12; it reads HLASDFAFS. The span at 41 to 50 shows a compositional bias: gly residues; the sequence is PPGGSGIGPG. Position 111 is a phosphoserine; by MAPK (Ser-111). A Glycyl lysine isopeptide (Lys-Gly) (interchain with G-Cter in SUMO) cross-link involves residue Lys-123. Residues 138–212 form the POU-specific domain; the sequence is DIKALQKDLE…LLQKWVEEAD (75 aa). Arg-157 and Gln-164 together coordinate DNA. 2 DNA-binding regions span residues 180–186 and 193–196; these read SQTTICR and SFKN. The segment at residues 230–289 is a DNA-binding region (homeobox); it reads RKRKRTSIENRVRGNLESMFLQCPKPTLQQISHIAQQLGLEKDVVRVWFCNRRQKGKRSS. Thr-235 carries the phosphothreonine modification. Ser-236, Ser-289, and Ser-290 each carry phosphoserine. The segment at 287-316 is disordered; the sequence is RSSSDYSQREDFEAAGSPFPGGPVSFPLAP. The segment covering 302–313 has biased composition (low complexity); it reads GSPFPGGPVSFP. Position 355 is a phosphoserine (Ser-355).

The protein belongs to the POU transcription factor family. Class-5 subfamily. Interacts with PKM. Interacts with WWP2. Interacts with UBE2I and ZSCAN10. Interacts with PCGF1. Interacts with ESRRB; recruits ESRRB near the POU5F1-SOX2 element in the NANOG proximal promoter; the interaction is DNA independent. Interacts with ZNF322. Interacts with MAPK8 and MAPK9; the interaction allows MAPK8 and MAPK9 to phosphorylate POU5F1 on Ser-355. Interacts (when phosphorylated on Ser-355) with FBXW8. Interacts with FBXW4. Interacts with SOX2 and SOX15; binds synergistically with either SOX2 or SOX15 to DNA. Interacts with DDX56. Post-translationally, sumoylation enhances the protein stability, DNA binding and transactivation activity. Sumoylation is required for enhanced YES1 expression. Ubiquitinated; undergoes 'Lys-63'-linked polyubiquitination by WWP2 leading to proteasomal degradation. In terms of processing, ERK1/2-mediated phosphorylation at Ser-111 promotes nuclear exclusion and proteasomal degradation. Phosphorylation at Thr-235 and Ser-236 decrease DNA-binding and alters ability to activate transcription.

The protein localises to the cytoplasm. Its subcellular location is the nucleus. Transcription factor that binds to the octamer motif (5'-ATTTGCAT-3'). Forms a trimeric complex with SOX2 or SOX15 on DNA and controls the expression of a number of genes involved in embryonic development such as YES1, FGF4, UTF1 and ZFP206. Critical for early embryogenesis and for embryonic stem cell pluripotency. This chain is POU domain, class 5, transcription factor 1 (POU5F1), found in Sus scrofa (Pig).